Consider the following 485-residue polypeptide: Cysteine--tRNA ligase (485 aa).

Cys27 is a Zn(2+) binding site. The 'HIGH' region signature appears at 29 to 39 (ITAYDLCHIGH). The Zn(2+) site is built by Cys208, His233, and Glu237. The 'KMSKS' region motif lies at 265 to 269 (KMSKS). Lys268 provides a ligand contact to ATP.

This sequence belongs to the class-I aminoacyl-tRNA synthetase family. Monomer. Zn(2+) is required as a cofactor.

It is found in the cytoplasm. It carries out the reaction tRNA(Cys) + L-cysteine + ATP = L-cysteinyl-tRNA(Cys) + AMP + diphosphate. This chain is Cysteine--tRNA ligase, found in Nitratidesulfovibrio vulgaris (strain DSM 19637 / Miyazaki F) (Desulfovibrio vulgaris).